A 151-amino-acid chain; its full sequence is MD-2-related lipid-recognition protein (151 aa).

The signal sequence occupies residues 1–18 (MAALHWLLLAALLGCTLA). Intrachain disulfides connect C27-C141, C45-C51, and C95-C100. A glycan (N-linked (GlcNAc...) asparagine) is linked at N58.

N-glycosylated. Hemolymph (at protein level). Constitutively expressed mainly in fat body and also in hemocytes and secreted into hemolymph. Not detected in midgut, epidermis, or Malpighian tubule of naive larvae.

It is found in the secreted. Functionally, binds to lipopolysaccharide from a variety of Gram-negative bacteria and to lipid A. The chain is MD-2-related lipid-recognition protein from Manduca sexta (Tobacco hawkmoth).